An 89-amino-acid polypeptide reads, in one-letter code: MGRSLKKGPFVSQKLLAKIDAQLESGDRKPIKTWSRASMITPDFVGLTFLVHAGKNFATVYVTENMVGHKLGEFAPTRVFKQHGGIGKK.

The protein belongs to the universal ribosomal protein uS19 family.

In terms of biological role, protein S19 forms a complex with S13 that binds strongly to the 16S ribosomal RNA. This Akkermansia muciniphila (strain ATCC BAA-835 / DSM 22959 / JCM 33894 / BCRC 81048 / CCUG 64013 / CIP 107961 / Muc) protein is Small ribosomal subunit protein uS19.